The primary structure comprises 341 residues: MSLEATDSKAMVLLMGVRRCGKSSICKVVFHNMQPLDTLYLESTSNPSLEHFSTLIDLAVMELPGQLNYFEPSYDSERLFKSVGALVYVIDSQDEYINAITNLAMIIEYAYKVNPSINIEVLIHKVDGLSEDFKVDAQRDIMQRTGEELLELGLDGVQVSFYLTSIFDHSIYEAFSRIVQKLIPELSFLENMLDNLIQHSKIEKAFLFDVNSKIYVSTDSNPVDIQMYEVCSEFIDVTIDLFDLYKAPVLRNSQKSSDKDNVINPRNELQNVSQLANGVIIYLRQMIRGLALVAIIRPNGTDMESCLTVADYNIDIFKKGLEDIWANARASQAKNSIEDDV.

Residues Ser-23, Ser-24, Ser-43, His-124, and Asp-127 each coordinate GTP.

Belongs to the GTR/RAG GTP-binding protein family. In terms of assembly, heterodimer; with GTR1. Component of the GSE complex composed of GTR1, GTR2, SLM4, MEH1 and LTV1. Component of the EGO complex, at least composed of GTR2, SLM4 and MEH1. Interacts with GTR1; the interaction is direct.

The protein resides in the vacuole membrane. The enzyme catalyses GTP + H2O = GDP + phosphate + H(+). In terms of biological role, GTPase involved in activation of the TORC1 signaling pathway, which promotes growth and represses autophagy in nutrient-rich conditions. Also required for TORC1 inactivation during nitrogen starvation. Required for intracellular sorting of GAP1 out of the endosome. Involved in the regulation of microautophagy. The sequence is that of GTP-binding protein GTR2 from Saccharomyces cerevisiae (strain ATCC 204508 / S288c) (Baker's yeast).